The chain runs to 470 residues: Cupincin (470 aa).

The first 34 residues, 1–34, serve as a signal peptide directing secretion; that stretch reads MAKKKTSSSMARSQLAALLISLCFLSLASNAVGW. Basic and acidic residues predominate over residues 36–52; it reads RRGEREEEDERRRHGGE. Disordered regions lie at residues 36–59 and 240–261; these read RRGE…PYHL and KSCS…PSSL. Cupin type-1 domains are found at residues 57–215 and 259–445; these read YHLG…EELE and SSLT…AREA. N-linked (GlcNAc...) asparagine glycosylation occurs at Asn-297. The tract at residues 330-368 is disordered; sequence PHVSGGGSSERREREREHGRRREEEQGEEEHGERGEKAR. Basic and acidic residues predominate over residues 338–367; that stretch reads SERREREREHGRRREEEQGEEEHGERGEKA. Zn(2+)-binding residues include His-347, Glu-352, and His-360.

Belongs to the 7S seed storage protein family. Homotrimer. It depends on Zn(2+) as a cofactor.

The protein localises to the secreted. Functionally, seed storage protein. Globulin-like protein that acts as a zinc metalloprotease. Cleaves specifically between Leu-15 and Tyr-16 of insulin B chain, and Gln-1 and Leu-2 of neurotensin (NT) peptide in vitro. May play a role as an initiating endopeptidase in germinating seeds. The polypeptide is Cupincin (Oryza sativa subsp. japonica (Rice)).